We begin with the raw amino-acid sequence, 456 residues long: Arginine biosynthesis bifunctional protein ArgJ, mitochondrial (456 aa).

Residues T184, K213, T224, E311, N451, and T456 each coordinate substrate. T224 acts as the Nucleophile in catalysis.

It belongs to the ArgJ family. In terms of assembly, heterodimer of an alpha and a beta chain. In terms of processing, the alpha and beta chains are autoproteolytically processed from a single precursor protein within the mitochondrion.

It localises to the mitochondrion matrix. The enzyme catalyses N(2)-acetyl-L-ornithine + L-glutamate = N-acetyl-L-glutamate + L-ornithine. It carries out the reaction L-glutamate + acetyl-CoA = N-acetyl-L-glutamate + CoA + H(+). It participates in amino-acid biosynthesis; L-arginine biosynthesis; L-ornithine and N-acetyl-L-glutamate from L-glutamate and N(2)-acetyl-L-ornithine (cyclic): step 1/1. It functions in the pathway amino-acid biosynthesis; L-arginine biosynthesis; N(2)-acetyl-L-ornithine from L-glutamate: step 1/4. Functionally, catalyzes two activities which are involved in the cyclic version of arginine biosynthesis: the synthesis of acetylglutamate from glutamate and acetyl-CoA, and of ornithine by transacetylation between acetylornithine and glutamate. The polypeptide is Arginine biosynthesis bifunctional protein ArgJ, mitochondrial (Neosartorya fischeri (strain ATCC 1020 / DSM 3700 / CBS 544.65 / FGSC A1164 / JCM 1740 / NRRL 181 / WB 181) (Aspergillus fischerianus)).